Reading from the N-terminus, the 252-residue chain is Large ribosomal subunit protein uL4 (252 aa).

Belongs to the universal ribosomal protein uL4 family. As to quaternary structure, part of the 50S ribosomal subunit.

One of the primary rRNA binding proteins, this protein initially binds near the 5'-end of the 23S rRNA. It is important during the early stages of 50S assembly. It makes multiple contacts with different domains of the 23S rRNA in the assembled 50S subunit and ribosome. Its function is as follows. Forms part of the polypeptide exit tunnel. The protein is Large ribosomal subunit protein uL4 of Methanococcus maripaludis (strain C7 / ATCC BAA-1331).